The chain runs to 259 residues: Small ribosomal subunit protein uS2 (259 aa).

This sequence belongs to the universal ribosomal protein uS2 family.

The polypeptide is Small ribosomal subunit protein uS2 (Streptococcus pneumoniae (strain CGSP14)).